The chain runs to 221 residues: Histone H1-like protein HC2 (221 aa).

2 stretches are compositionally biased toward basic residues: residues 1–50 and 59–70; these read MLGV…KTVA and PVAKKATAKKAP. A disordered region spans residues 1–70; that stretch reads MLGVQKKRST…AKKATAKKAP (70 aa).

Belongs to the histone H1/H5 family. HCT subfamily.

Might have a role in establishing the nucleoid structure of elementary bodies. This chain is Histone H1-like protein HC2 (hctB), found in Chlamydia trachomatis serovar L2 (strain ATCC VR-902B / DSM 19102 / 434/Bu).